Consider the following 463-residue polypeptide: uncharacterized protein (463 aa).

The signal sequence occupies residues 1–23 (MKFSSIPIASTLLSLLVASSVTA). Disordered regions lie at residues 174–200 (STYNSTTSSYHNSTSTPPPTITSTKAS) and 239–258 (GASTVTSTQPSTVTSTQRKN).

The protein belongs to the but2 family.

It is found in the cytoplasm. This is an uncharacterized protein from Schizosaccharomyces pombe (strain 972 / ATCC 24843) (Fission yeast).